Reading from the N-terminus, the 257-residue chain is MVLIRVLANLLILQLSYAQKSSELVVGGDECNINEHRFLVLVYTDGIQCGGTLINKEWMLTAAHCDGKKMKLQFGLHSKNVPNKDKQTRVPKKKYFFPCSKNFTKWDKDIMLIRLNHPVNNSTHIAPLSLPSKPPSQDTVCNIMGWGTISPTKEIYPDVPHCANINIVDHAVCRAFYPGLLEKSKTLCAGILEGGKDTCQGVSGGPLICNGQIQGIVSVGGDPCAEPRVPALYTKVFDHLDWIKSIIAGNTAATCPL.

An N-terminal signal peptide occupies residues 1–18 (MVLIRVLANLLILQLSYA). Positions 19 to 24 (QKSSEL) are excised as a propeptide. The Peptidase S1 domain occupies 25–248 (VVGGDECNIN…HLDWIKSIIA (224 aa)). Cystine bridges form between cysteine 31/cysteine 162, cysteine 49/cysteine 65, cysteine 141/cysteine 209, cysteine 173/cysteine 188, and cysteine 199/cysteine 224. Histidine 64 functions as the Charge relay system in the catalytic mechanism. A glycan (N-linked (GlcNAc...) asparagine) is linked at asparagine 102. Catalysis depends on aspartate 109, which acts as the Charge relay system. N-linked (GlcNAc...) asparagine glycans are attached at residues asparagine 120 and asparagine 121. The Charge relay system role is filled by serine 203.

It belongs to the peptidase S1 family. Snake venom subfamily. Monomer. As to expression, expressed by the venom gland.

It is found in the secreted. Functionally, snake venom serine protease that may act in the hemostasis system of the prey. The sequence is that of Snake venom serine protease KN10 from Trimeresurus stejnegeri (Chinese green tree viper).